We begin with the raw amino-acid sequence, 275 residues long: Putative acyl-[acyl-carrier-protein] desaturase DesA2 (275 aa).

Fe cation is bound by residues E107, H110, E159, E189, and H192.

The protein belongs to the fatty acid desaturase type 2 family. In terms of assembly, homodimer. Fe(2+) serves as cofactor.

It participates in lipid metabolism; fatty acid metabolism. Its function is as follows. May be a desaturase involved in mycobacterial fatty acid biosynthesis. The sequence is that of Putative acyl-[acyl-carrier-protein] desaturase DesA2 (desA2) from Mycobacterium tuberculosis (strain CDC 1551 / Oshkosh).